The following is a 378-amino-acid chain: Ribosomal RNA large subunit methyltransferase G (378 aa).

Belongs to the methyltransferase superfamily. RlmG family.

The protein localises to the cytoplasm. It catalyses the reaction guanosine(1835) in 23S rRNA + S-adenosyl-L-methionine = N(2)-methylguanosine(1835) in 23S rRNA + S-adenosyl-L-homocysteine + H(+). Functionally, specifically methylates the guanine in position 1835 (m2G1835) of 23S rRNA. The sequence is that of Ribosomal RNA large subunit methyltransferase G from Escherichia coli O1:K1 / APEC.